Reading from the N-terminus, the 294-residue chain is NAD kinase (294 aa).

Catalysis depends on aspartate 74, which acts as the Proton acceptor. NAD(+) contacts are provided by residues 74–75, arginine 79, 149–150, aspartate 179, 190–195, and alanine 214; these read DG, NE, and TGYSLS.

Belongs to the NAD kinase family. Requires a divalent metal cation as cofactor.

The protein localises to the cytoplasm. The enzyme catalyses NAD(+) + ATP = ADP + NADP(+) + H(+). Functionally, involved in the regulation of the intracellular balance of NAD and NADP, and is a key enzyme in the biosynthesis of NADP. Catalyzes specifically the phosphorylation on 2'-hydroxyl of the adenosine moiety of NAD to yield NADP. This Flavobacterium johnsoniae (strain ATCC 17061 / DSM 2064 / JCM 8514 / BCRC 14874 / CCUG 350202 / NBRC 14942 / NCIMB 11054 / UW101) (Cytophaga johnsonae) protein is NAD kinase.